We begin with the raw amino-acid sequence, 658 residues long: MKDKFELVSKYSPQGDQPRAIEQLVAGLKKGLKHQTLLGATGTGKTFTVSNVIQEVNKPTLVMAHNKTLAGQLYSEFKEFFPNNAVEYFVSYYDYYQPEAYVPQSDTYIEKDASINDEIDKLRHSATAALFERRDVIIIASVSCIYGLGSPIEYGEMLVSLRVGMEISRDQLLRKLVDIQYDRNDIDFQRGRFRVRGDVVEIFPASRDEHCMRIEFFGDEIERIREVDALTGEIIGEREHVSIFPASHFVTRPDIMKKAIVNIKAELEDRLQVLRADNKLLEAQRLEQRTNYDLEMMEEMGYCSGIENYSRHLSLRPAGVTPYTLLDYFPDDFQMVIDESHVTMPQIRGMFNGDQARKQMLVDHGFRLPSALDNRPLRLEEFEKHINQIMFISATPGPYELEKNPDVIEQIIRPTGLLDPIVEIRPIQGQIDDLMDEINNRVEKNERVLITTLTKKMSEDLTNYLKEAGVKVQYLHSEVKTLERIEIIRDLRLGVYDVIVGINLLREGIDLPEVSLVAILDADKEGFLRSERSLIQTMGRAARNENGRVIMYADKMTDSMRNSIGETERRRKIQIEYNEKHGITPKTIKKEIRGIIAATSAADEREAVKQHDLSKMSKKERDVFIEGMEHEMKEAAKALDFERAAELRDALLEIKAEG.

Positions 26–414 (AGLKKGLKHQ…PDVIEQIIRP (389 aa)) constitute a Helicase ATP-binding domain. 39–46 (GATGTGKT) contacts ATP. Residues 92-115 (YYDYYQPEAYVPQSDTYIEKDASI) carry the Beta-hairpin motif. Residues 430 to 592 (QIDDLMDEIN…ITPKTIKKEI (163 aa)) form the Helicase C-terminal domain. A UVR domain is found at 622–658 (DVFIEGMEHEMKEAAKALDFERAAELRDALLEIKAEG).

Belongs to the UvrB family. As to quaternary structure, forms a heterotetramer with UvrA during the search for lesions. Interacts with UvrC in an incision complex.

It localises to the cytoplasm. In terms of biological role, the UvrABC repair system catalyzes the recognition and processing of DNA lesions. A damage recognition complex composed of 2 UvrA and 2 UvrB subunits scans DNA for abnormalities. Upon binding of the UvrA(2)B(2) complex to a putative damaged site, the DNA wraps around one UvrB monomer. DNA wrap is dependent on ATP binding by UvrB and probably causes local melting of the DNA helix, facilitating insertion of UvrB beta-hairpin between the DNA strands. Then UvrB probes one DNA strand for the presence of a lesion. If a lesion is found the UvrA subunits dissociate and the UvrB-DNA preincision complex is formed. This complex is subsequently bound by UvrC and the second UvrB is released. If no lesion is found, the DNA wraps around the other UvrB subunit that will check the other stand for damage. This is UvrABC system protein B from Listeria monocytogenes serotype 4b (strain F2365).